Reading from the N-terminus, the 708-residue chain is MFLLHFPSALIILVPSHRIAFTMSTDHSARSPRLRACVRCQQRKVRCDHKSPCGNCVASDSQCVPATLTPRRRRFQERVLLDRLRHYEGLLRQHNIYFEPLHPQAKQEPVIADVPRDCERSETARAQTPVQSQAVDLWQAISRVTLEPEDDDGDSPDVQADGVENAWDHHVDQPEANDQTGDDLLFGQPQANVNVLALHPEQAQIFRLWQTYLENVNPLLKVTHTPTLQPRIVDAVSDLGDIHPTLEALMFSIYCIAVMSLADNECHRLLKSSKEDLLARYRLGCRQVLIKCRPWQFTNVDGLTAVYLYLVSVSPQTDPRSLSSMLAAALRIAQRMGLHNESTYTRYTAVEAEMRRRLWWSLVIFDHRMCEMSDYKVTTLTPTWDCRIPLNKPTEALFAVVRSELADLIRHTTFHINFVNPVLAAVAKAKDPGHVSISADGEMLTIQRAIEEKYLAFCDPADPLHFMTIWTTRGYLARNRLLEHYARHLSSPAMQQTDAQRNAALSYALEMLECDTRLRVSPLTCRYRWLVDFHVPALAYIHVLNDLRKRPTESHAGKAWQAMSENYEARAMHPKPSGQGVFTVFARVVLQAWGAREIFLRQRGMPVEAPQIVLDIRSKVGQTSSGSSMVPSCSTGEPSHSSIAISAHSEAIPAQMNFTGHSADGQAFPGPDLGPSSFPDVAGPPGMDIDIDQFWTAMDWRLMHTQAW.

Residues 37-63 (CVRCQQRKVRCDHKSPCGNCVASDSQC) constitute a DNA-binding region (zn(2)-C6 fungal-type).

The protein localises to the nucleus. Functionally, transcriptional regulator; part of the gene cluster that mediates the biosynthesis of the tetrahydroxanthone dimer neosartorin, which exhibits antibacterial activity. The protein is Transcriptional regulator nsrM of Aspergillus novofumigatus (strain IBT 16806).